The following is a 213-amino-acid chain: Nucleoside triphosphate pyrophosphatase (213 aa).

Aspartate 79 (proton acceptor) is an active-site residue.

It belongs to the Maf family. A divalent metal cation serves as cofactor.

It localises to the cytoplasm. The catalysed reaction is a ribonucleoside 5'-triphosphate + H2O = a ribonucleoside 5'-phosphate + diphosphate + H(+). It catalyses the reaction a 2'-deoxyribonucleoside 5'-triphosphate + H2O = a 2'-deoxyribonucleoside 5'-phosphate + diphosphate + H(+). Its function is as follows. Nucleoside triphosphate pyrophosphatase. May have a dual role in cell division arrest and in preventing the incorporation of modified nucleotides into cellular nucleic acids. The polypeptide is Nucleoside triphosphate pyrophosphatase (Rhodococcus erythropolis (strain PR4 / NBRC 100887)).